The following is a 340-amino-acid chain: Ketol-acid reductoisomerase (NADP(+)) (340 aa).

Residues 1–183 (MAITVYYDKD…GGGRTGIIET (183 aa)) enclose the KARI N-terminal Rossmann domain. Residues 26–29 (FGSQ), Arg49, Ser52, Ser54, and 84–87 (DEIQ) each bind NADP(+). The active site involves His109. Gly135 provides a ligand contact to NADP(+). In terms of domain architecture, KARI C-terminal knotted spans 184–329 (TFKAETETDL…RNLRAMMPWI (146 aa)). Mg(2+)-binding residues include Asp192, Glu196, Glu228, and Glu232. Ser253 is a binding site for substrate.

It belongs to the ketol-acid reductoisomerase family. Requires Mg(2+) as cofactor.

It carries out the reaction (2R)-2,3-dihydroxy-3-methylbutanoate + NADP(+) = (2S)-2-acetolactate + NADPH + H(+). The catalysed reaction is (2R,3R)-2,3-dihydroxy-3-methylpentanoate + NADP(+) = (S)-2-ethyl-2-hydroxy-3-oxobutanoate + NADPH + H(+). It participates in amino-acid biosynthesis; L-isoleucine biosynthesis; L-isoleucine from 2-oxobutanoate: step 2/4. The protein operates within amino-acid biosynthesis; L-valine biosynthesis; L-valine from pyruvate: step 2/4. Its function is as follows. Involved in the biosynthesis of branched-chain amino acids (BCAA). Catalyzes an alkyl-migration followed by a ketol-acid reduction of (S)-2-acetolactate (S2AL) to yield (R)-2,3-dihydroxy-isovalerate. In the isomerase reaction, S2AL is rearranged via a Mg-dependent methyl migration to produce 3-hydroxy-3-methyl-2-ketobutyrate (HMKB). In the reductase reaction, this 2-ketoacid undergoes a metal-dependent reduction by NADPH to yield (R)-2,3-dihydroxy-isovalerate. This Campylobacter jejuni subsp. jejuni serotype O:23/36 (strain 81-176) protein is Ketol-acid reductoisomerase (NADP(+)).